Reading from the N-terminus, the 671-residue chain is UvrABC system protein B (671 aa).

Positions 26 to 414 (EGLENGLAHQ…GGDIIEQVVR (389 aa)) constitute a Helicase ATP-binding domain. 39–46 (GVTGSGKT) is a binding site for ATP. The Beta-hairpin motif lies at 92–115 (YYDYYQPEAYVPSSDTFIEKDASV). The Helicase C-terminal domain occupies 431–593 (QVDDLLSEIR…IIPQGLNKKI (163 aa)). The UVR domain occupies 631–666 (DQKIRELEAKMYTYAQNLEFEQAAELRDQVHQLRQQ).

The protein belongs to the UvrB family. Forms a heterotetramer with UvrA during the search for lesions. Interacts with UvrC in an incision complex.

The protein resides in the cytoplasm. In terms of biological role, the UvrABC repair system catalyzes the recognition and processing of DNA lesions. A damage recognition complex composed of 2 UvrA and 2 UvrB subunits scans DNA for abnormalities. Upon binding of the UvrA(2)B(2) complex to a putative damaged site, the DNA wraps around one UvrB monomer. DNA wrap is dependent on ATP binding by UvrB and probably causes local melting of the DNA helix, facilitating insertion of UvrB beta-hairpin between the DNA strands. Then UvrB probes one DNA strand for the presence of a lesion. If a lesion is found the UvrA subunits dissociate and the UvrB-DNA preincision complex is formed. This complex is subsequently bound by UvrC and the second UvrB is released. If no lesion is found, the DNA wraps around the other UvrB subunit that will check the other stand for damage. This chain is UvrABC system protein B, found in Yersinia pestis.